A 100-amino-acid chain; its full sequence is NADH-quinone oxidoreductase subunit K (100 aa).

The next 3 membrane-spanning stretches (helical) occupy residues 2–22, 28–48, and 63–83; these read ISLNHYLLLCVILFCIGLFGI, ILMLFFSTEILLNAINIGFVA, and LFIIAIAASEIAVGLGLVVIW.

Belongs to the complex I subunit 4L family. As to quaternary structure, NDH-1 is composed of 14 different subunits. Subunits NuoA, H, J, K, L, M, N constitute the membrane sector of the complex.

It is found in the cell inner membrane. It carries out the reaction a quinone + NADH + 5 H(+)(in) = a quinol + NAD(+) + 4 H(+)(out). Its function is as follows. NDH-1 shuttles electrons from NADH, via FMN and iron-sulfur (Fe-S) centers, to quinones in the respiratory chain. The immediate electron acceptor for the enzyme in this species is believed to be ubiquinone. Couples the redox reaction to proton translocation (for every two electrons transferred, four hydrogen ions are translocated across the cytoplasmic membrane), and thus conserves the redox energy in a proton gradient. In Helicobacter hepaticus (strain ATCC 51449 / 3B1), this protein is NADH-quinone oxidoreductase subunit K.